Reading from the N-terminus, the 112-residue chain is Mediator of RNA polymerase II transcription subunit 22 (112 aa).

The disordered stretch occupies residues 83–112; the sequence is KPEDGGEGQLADELLDKIEDTSDGVDKETA. A compositionally biased stretch (basic and acidic residues) spans 96-112; that stretch reads LLDKIEDTSDGVDKETA.

It belongs to the Mediator complex subunit 22 family. As to quaternary structure, component of the Mediator complex.

The protein localises to the nucleus. Its function is as follows. Component of the Mediator complex, a coactivator involved in the regulated transcription of nearly all RNA polymerase II-dependent genes. Mediator functions as a bridge to convey information from gene-specific regulatory proteins to the basal RNA polymerase II transcription machinery. Mediator is recruited to promoters by direct interactions with regulatory proteins and serves as a scaffold for the assembly of a functional preinitiation complex with RNA polymerase II and the general transcription factors. This Yarrowia lipolytica (strain CLIB 122 / E 150) (Yeast) protein is Mediator of RNA polymerase II transcription subunit 22 (SRB6).